A 798-amino-acid polypeptide reads, in one-letter code: MNISYNWLQEFCEIPYTAQELGEKLTSVGIAVEKVTYIGNYEKVVVGEVLEVENLPGTELFKTKVSTGKEIFEVVTGAKNVFAGFKYPFALPGAKLPNGITIEERRIRGVVSQGMLLSAEELGLLERKGAEPGLMLLPPEAPVGEKIEKVLELDDYLLELDLTPNRGDCLSVLGVAREVAALTGHRLKLAEPELPLDNGSCPVSIEIQNPELCGRYMGIVIKNVKVGPSPLWLEQRLRKAGIRPINNIVDVTNYILLEYGQPLHAFDLDKLASPEIIVRNARAGEKITTLDGVERELTSEMLVIADREKPIAVAGIMGGQNTEVDDDTKTVFIEAAWFNPVSVRKTARKLGLRTDASQRFEKNVDIEGIKRALIKAALMICELAGGTIQGRYGDVYPKKFTPKVIAVSLSRAEEFLGISLDAKRVVEILESLGFRVTIGEKKIFVEVPSYRPDVSLEADIYEEIARYLGYNNFPDTMPIGITTTGFSPEYNFEYKVKNLLTALGMQEIITYSFINPDSYNKLGLSVDEVLTKSVVLLNPLSIEQSVMRTTLLPGLLDIAKRNENRQQENLLLFEMGNVFEKNGEDLPKETKLIGGIALGYRYGDWYNKPRKYDFYYVKGILESLFTSLGINNFSFSAAKDLPFLHPGKAARVYLENTEIGYLGELHPLVQKKYEFKNTPLVFELNYDLLKTLIPAEKKYTPLSPYPEVKRDIALLVEREIPAATFIEVIKGLAINTLKNIEIFDVYEGEKLGPNKKSIAISLTFSSTEKTLSEEEINNFMAQVLKALEAKTGAKLRTF.

A tRNA-binding domain is found at 38–148 (IGNYEKVVVG…PEAPVGEKIE (111 aa)). Residues 400–475 (FTPKVIAVSL…RYLGYNNFPD (76 aa)) form the B5 domain. Mg(2+) is bound by residues D453, D459, E462, and E463. Residues 703–796 (SPYPEVKRDI…LEAKTGAKLR (94 aa)) enclose the FDX-ACB domain.

It belongs to the phenylalanyl-tRNA synthetase beta subunit family. Type 1 subfamily. In terms of assembly, tetramer of two alpha and two beta subunits. The cofactor is Mg(2+).

The protein resides in the cytoplasm. The enzyme catalyses tRNA(Phe) + L-phenylalanine + ATP = L-phenylalanyl-tRNA(Phe) + AMP + diphosphate + H(+). This Carboxydothermus hydrogenoformans (strain ATCC BAA-161 / DSM 6008 / Z-2901) protein is Phenylalanine--tRNA ligase beta subunit.